We begin with the raw amino-acid sequence, 207 residues long: Chaperone protein TorD (207 aa).

The protein belongs to the TorD/DmsD family. TorD subfamily.

The protein resides in the cytoplasm. Its function is as follows. Involved in the biogenesis of TorA. Acts on TorA before the insertion of the molybdenum cofactor and, as a result, probably favors a conformation of the apoenzyme that is competent for acquiring the cofactor. The sequence is that of Chaperone protein TorD from Aggregatibacter aphrophilus (strain NJ8700) (Haemophilus aphrophilus).